Consider the following 382-residue polypeptide: Galactokinase (382 aa).

34 to 37 (EHTD) serves as a coordination point for substrate. 124–130 (GAGLSSS) contacts ATP. Residues serine 130 and glutamate 162 each contribute to the Mg(2+) site. Catalysis depends on aspartate 174, which acts as the Proton acceptor. Residue tyrosine 223 coordinates substrate.

Belongs to the GHMP kinase family. GalK subfamily.

The protein localises to the cytoplasm. It catalyses the reaction alpha-D-galactose + ATP = alpha-D-galactose 1-phosphate + ADP + H(+). It participates in carbohydrate metabolism; galactose metabolism. Catalyzes the transfer of the gamma-phosphate of ATP to D-galactose to form alpha-D-galactose-1-phosphate (Gal-1-P). In Erwinia tasmaniensis (strain DSM 17950 / CFBP 7177 / CIP 109463 / NCPPB 4357 / Et1/99), this protein is Galactokinase.